The sequence spans 99 residues: Large ribosomal subunit protein eL21 (99 aa).

It belongs to the eukaryotic ribosomal protein eL21 family.

The chain is Large ribosomal subunit protein eL21 from Staphylothermus marinus (strain ATCC 43588 / DSM 3639 / JCM 9404 / F1).